Here is a 403-residue protein sequence, read N- to C-terminus: Leu/Ile/Val-binding protein homolog 8 (403 aa).

The first 26 residues, 1 to 26, serve as a signal peptide directing secretion; it reads MRLSRLLIGASLGVALSSTVFTAALA.

Belongs to the leucine-binding protein family.

In terms of biological role, component of an amino-acid transport system. The chain is Leu/Ile/Val-binding protein homolog 8 from Brucella abortus (strain 2308).